The following is a 117-amino-acid chain: Immunoglobulin kappa variable 1-33 (117 aa).

The N-terminal stretch at 1–22 (MDMRVPAQLLGLLLLWLSGARC) is a signal peptide. The interval 23–45 (DIQMTQSPSSLSASVGDRVTITC) is framework-1. An Ig-like domain is found at 24-117 (IQMTQSPSSL…YYCQQYDNLP (94 aa)). A disulfide bridge links C45 with C110. Positions 46-56 (QASQDISNYLN) are complementarity-determining-1. The framework-2 stretch occupies residues 57–71 (WYQQKPGKAPKLLIY). A complementarity-determining-2 region spans residues 72–78 (DASNLET). Residues 79-110 (GVPSRFSGSGSGTDFTFTISSLQPEDIATYYC) are framework-3. A complementarity-determining-3 region spans residues 111 to 117 (QQYDNLP).

In terms of assembly, immunoglobulins are composed of two identical heavy chains and two identical light chains; disulfide-linked.

The protein localises to the secreted. It localises to the cell membrane. V region of the variable domain of immunoglobulin light chains that participates in the antigen recognition. Immunoglobulins, also known as antibodies, are membrane-bound or secreted glycoproteins produced by B lymphocytes. In the recognition phase of humoral immunity, the membrane-bound immunoglobulins serve as receptors which, upon binding of a specific antigen, trigger the clonal expansion and differentiation of B lymphocytes into immunoglobulins-secreting plasma cells. Secreted immunoglobulins mediate the effector phase of humoral immunity, which results in the elimination of bound antigens. The antigen binding site is formed by the variable domain of one heavy chain, together with that of its associated light chain. Thus, each immunoglobulin has two antigen binding sites with remarkable affinity for a particular antigen. The variable domains are assembled by a process called V-(D)-J rearrangement and can then be subjected to somatic hypermutations which, after exposure to antigen and selection, allow affinity maturation for a particular antigen. The chain is Immunoglobulin kappa variable 1-33 from Homo sapiens (Human).